A 459-amino-acid chain; its full sequence is Elongation factor 1-alpha (459 aa).

Glycine 2 bears the N,N,N-trimethylglycine mark. Residue lysine 3 is modified to N6,N6-dimethyllysine; alternate. Lysine 3 carries the N6-methyllysine; alternate modification. Residues 5–240 enclose the tr-type G domain; sequence KLHVNVVVIG…DAIEPPTRPT (236 aa). A G1 region spans residues 14 to 21; that stretch reads GHVDSGKS. Position 14–21 (14–21) interacts with GTP; sequence GHVDSGKS. Lysine 30 carries the N6-methyllysine modification. Residues 70 to 74 are G2; it reads GITID. Lysine 79 is subject to N6,N6,N6-trimethyllysine. Positions 91–94 are G3; sequence DAPG. GTP is bound by residues 91-95 and 153-156; these read DAPGH and NKMD. Residues 153–156 form a G4 region; it reads NKMD. Residues 192–194 form a G5 region; that stretch reads SGW. Lysine 316 is modified (N6,N6-dimethyllysine; alternate). Residue lysine 316 is modified to N6-methyllysine; alternate. Lysine 390 bears the N6-methyllysine mark.

The protein belongs to the TRAFAC class translation factor GTPase superfamily. Classic translation factor GTPase family. EF-Tu/EF-1A subfamily.

It is found in the cytoplasm. Functionally, this protein promotes the GTP-dependent binding of aminoacyl-tRNA to the A-site of ribosomes during protein biosynthesis. The chain is Elongation factor 1-alpha (TEF1) from Cryptococcus neoformans var. neoformans serotype D (strain B-3501A) (Filobasidiella neoformans).